Here is a 1332-residue protein sequence, read N- to C-terminus: Xanthine dehydrogenase/oxidase (1332 aa).

The 2Fe-2S ferredoxin-type domain maps to 4 to 91; the sequence is DELVFFVNGK…HVAVTTVEGI (88 aa). C43, C48, C51, C73, C113, C116, C148, and C150 together coordinate [2Fe-2S] cluster. The FAD-binding PCMH-type domain maps to 229–414; that stretch reads FEGERVTWIQ…LSIEIPYSRE (186 aa). FAD-binding positions include 257-264, F337, 347-351, D360, L404, and K422; these read LVVGNTEI and SLGGN. A disulfide bond links C535 and C992. Residues Q767 and F798 each contribute to the Mo-molybdopterin site. Residues E802 and R880 each contribute to the substrate site. Residue R912 participates in Mo-molybdopterin binding. Substrate contacts are provided by F914 and T1010. A1079 is a Mo-molybdopterin binding site. E1261 functions as the Proton acceptor in the catalytic mechanism.

The protein belongs to the xanthine dehydrogenase family. Homodimer. Interacts with BTN1A1. It depends on [2Fe-2S] cluster as a cofactor. The cofactor is FAD. Mo-molybdopterin serves as cofactor. In terms of processing, subject to partial proteolysis; this alters the enzyme from the dehydrogenase form (D) to the oxidase form (O). Contains sulfhydryl groups that are easily oxidized (in vitro); this alters the enzyme from the dehydrogenase form (D) to the oxidase form (O). In terms of tissue distribution, detected in milk (at protein level).

It localises to the cytoplasm. Its subcellular location is the peroxisome. The protein localises to the secreted. It carries out the reaction xanthine + NAD(+) + H2O = urate + NADH + H(+). The catalysed reaction is hypoxanthine + NAD(+) + H2O = xanthine + NADH + H(+). It catalyses the reaction xanthine + O2 + H2O = urate + H2O2. Can be converted from the dehydrogenase form (D) to the oxidase form (O) irreversibly by proteolysis or reversibly through the oxidation of sulfhydryl groups. Its function is as follows. Key enzyme in purine degradation. Catalyzes the oxidation of hypoxanthine to xanthine. Catalyzes the oxidation of xanthine to uric acid. Contributes to the generation of reactive oxygen species. The polypeptide is Xanthine dehydrogenase/oxidase (XDH) (Bos taurus (Bovine)).